The sequence spans 578 residues: Proline--tRNA ligase (578 aa).

It belongs to the class-II aminoacyl-tRNA synthetase family. ProS type 1 subfamily. Homodimer.

It is found in the cytoplasm. It catalyses the reaction tRNA(Pro) + L-proline + ATP = L-prolyl-tRNA(Pro) + AMP + diphosphate. Its function is as follows. Catalyzes the attachment of proline to tRNA(Pro) in a two-step reaction: proline is first activated by ATP to form Pro-AMP and then transferred to the acceptor end of tRNA(Pro). As ProRS can inadvertently accommodate and process non-cognate amino acids such as alanine and cysteine, to avoid such errors it has two additional distinct editing activities against alanine. One activity is designated as 'pretransfer' editing and involves the tRNA(Pro)-independent hydrolysis of activated Ala-AMP. The other activity is designated 'posttransfer' editing and involves deacylation of mischarged Ala-tRNA(Pro). The misacylated Cys-tRNA(Pro) is not edited by ProRS. The polypeptide is Proline--tRNA ligase (Burkholderia multivorans (strain ATCC 17616 / 249)).